We begin with the raw amino-acid sequence, 284 residues long: MSNITISQLLALSLAKFNQCDISTKHDLQMIICDVLGVDKTYLYINLDKQLDKNTLKKIDEKILRLLAGEPLAYILGYKYFWNQKLYVTKDTLIPRADTETVVATVLDDIQNKDAQLKILDLGTGTGAIALALAAELANSQVVAVDLYQQSLDVAKKNAQANNITNVKFIQSSWYTNLDTDKFDIIVSNPPYIDLADTNIDQSVKDYEPARALFAADNGLADIRIIISQAKDFLNLGGFIYIEHGFTQADAITALFSQCNFTDIKIVKDLNNNDRCTKAQLGYL.

Residues 123 to 127 (GTGTG), Asp-146, Trp-174, and Asn-189 contribute to the S-adenosyl-L-methionine site. Position 189 to 192 (189 to 192 (NPPY)) interacts with substrate.

It belongs to the protein N5-glutamine methyltransferase family. PrmC subfamily.

It catalyses the reaction L-glutaminyl-[peptide chain release factor] + S-adenosyl-L-methionine = N(5)-methyl-L-glutaminyl-[peptide chain release factor] + S-adenosyl-L-homocysteine + H(+). Methylates the class 1 translation termination release factors RF1/PrfA and RF2/PrfB on the glutamine residue of the universally conserved GGQ motif. This is Release factor glutamine methyltransferase from Francisella tularensis subsp. tularensis (strain SCHU S4 / Schu 4).